A 60-amino-acid chain; its full sequence is Large ribosomal subunit protein uL30 (60 aa).

It belongs to the universal ribosomal protein uL30 family. As to quaternary structure, part of the 50S ribosomal subunit.

The chain is Large ribosomal subunit protein uL30 from Syntrophomonas wolfei subsp. wolfei (strain DSM 2245B / Goettingen).